A 480-amino-acid chain; its full sequence is 2-phosphoxylose phosphatase 1 (480 aa).

Over 1–6 the chain is Cytoplasmic; that stretch reads MLYRNR. A helical; Signal-anchor for type II membrane protein transmembrane segment spans residues 7 to 27; the sequence is FLVLLALAGLLAFLSLSLQFF. The Lumenal segment spans residues 28–480; it reads HLIPVSTTKN…YYDACHGEGA (453 aa). The active-site Nucleophile is the His97. 3 N-linked (GlcNAc...) asparagine glycosylation sites follow: Asn194, Asn305, and Asn354. Catalysis depends on Asp379, which acts as the Proton donor.

It belongs to the histidine acid phosphatase family. As to quaternary structure, interacts with B3GAT3; the interaction increases the 2-phosphoxylose phosphatase activity of PXYLP1 during completion of linkage region formation in a B3GAT3-mediated manner.

Its subcellular location is the golgi apparatus membrane. It carries out the reaction 3-O-[beta-D-GlcA-(1-&gt;3)-beta-D-Gal-(1-&gt;3)-beta-D-Gal-(1-&gt;4)-beta-D-2-O-P-Xyl]-L-seryl-[protein] + H2O = 3-O-(beta-D-GlcA-(1-&gt;3)-beta-D-Gal-(1-&gt;3)-beta-D-Gal-(1-&gt;4)-beta-D-Xyl)-L-seryl-[protein] + phosphate. Functionally, responsible for the 2-O-dephosphorylation of xylose in the glycosaminoglycan-protein linkage region of proteoglycans thereby regulating the amount of mature glycosaminoglycan (GAG) chains. Sulfated glycosaminoglycans (GAGs), including heparan sulfate and chondroitin sulfate, are synthesized on the so-called common GAG-protein linkage region (GlcUAbeta1-3Galbeta1-3Galbeta1-4Xylbeta1-O-Ser) of core proteins, which is formed by the stepwise addition of monosaccharide residues by the respective specific glycosyltransferases. Xylose 2-O-dephosphorylation during completion of linkage region formation is a prerequisite for the initiation and efficient elongation of the repeating disaccharide region of GAG chains. This Rattus norvegicus (Rat) protein is 2-phosphoxylose phosphatase 1.